We begin with the raw amino-acid sequence, 116 residues long: G antigen 2B/2C (116 aa).

The segment at 1–116 (MSWRGRSTYR…PEEGEKQSQC (116 aa)) is disordered. Composition is skewed to acidic residues over residues 31–44 (FSDE…EEGE) and 86–95 (ECEDGPDGQE). The segment covering 102–116 (EEVKTPEEGEKQSQC) has biased composition (basic and acidic residues).

This sequence belongs to the GAGE family. As to expression, expressed in a variety of tumor tissues but not in normal tissues, except testis.

In terms of biological role, antigen, recognized on melanoma by autologous cytolytic T-lymphocytes. The protein is G antigen 2B/2C (GAGE2B) of Homo sapiens (Human).